An 897-amino-acid chain; its full sequence is MSSSRSQSPETPKAASEEREEEEKESSEQPDTPKTSSEKSASRSQSPRESREVSQETETSENQEKIKEKDDGDDQPGTPNSYRSRETSPAPKRSKETRESESPEKSPVRSRSPRRSSARSPSRSPRRRRERSSERKQSEEPAPLPEKKKKEPLDILRTRTGGAYIPPAKLRLMQQQISDKQSEQYQRMNWERMKKKIHGLVNRVNAKNLVQIVRELLQENVIRSKGLLCRDIIQAQAFSPGFSNVYAALAAVINSKFPHVGELLLRRLIVQFKRSFRRNDRGVTVNVIKFIAHLINQQVAHEVLALEIMILMLEEPTDDSVEVAIAFLKECGAKLLEIAPAALNSVYDRLRAILMETERSENALDRRIQYMIETAMQIRKDKFAAYPAVIEDLDLIEEEDQIIHTLNLEDAVDPENGLNVFKLDPEFEKNEEVYEEIRKEIIGNADISDEDGGDELDDEEEGSDVEEAPKKTTEIIDNTDQNLTAFRREVYLTMQSSLDYQEAAHKLLKMKIPDSMQNELCAMLVDCCAQQRTYERFYGMLIERFCRLRLEYQQYFEKLCQDTYSTIHRIDITKLRNLARLIAHLLSTDAIDWKILADMKMTEEDTTSSGRIYIKYIFNELVEAMGMVKLHSRVTDPTLAHCFVGLFPRTNPNSARFSINFFTMIGLGGLTLELREWLAKGLKKKKGMLDQLKAESSSDSSSSSDSSDSSDSSDSDDSSDSSSDSSSSSESEPEPPKKKKKKNSEESSKKKEKENIGRRDRGDKRAERHRDQSVENKDKDRRRRQDSDENRRPERGDDRKDRSKDRRRQDSDDEDRKGRERREDSGERRRGDRDRRDRNKDQEDHREDRRDRSKDREDRRDRRRHDSDDDRKTRRDRSEERGGRRREVESDDRRRRR.

The span at 1 to 10 (MSSSRSQSPE) shows a compositional bias: polar residues. Residues 1–155 (MSSSRSQSPE…EKKKKEPLDI (155 aa)) form a disordered region. Basic and acidic residues-rich tracts occupy residues 36–54 (SSEKSASRSQSPRESREVS), 93–107 (RSKETRESESPEKSP), and 131–155 (RSSERKQSEEPAPLPEKKKKEPLDI). The MIF4G domain maps to 194-382 (KKKIHGLVNR…ETAMQIRKDK (189 aa)). A disordered region spans residues 444–472 (NADISDEDGGDELDDEEEGSDVEEAPKKT). Residues 447 to 466 (ISDEDGGDELDDEEEGSDVE) are compositionally biased toward acidic residues. One can recognise an MI domain in the interval 485–601 (AFRREVYLTM…DWKILADMKM (117 aa)). Composition is skewed to low complexity over residues 689-710 (LDQLKAESSSDSSSSSDSSDSS) and 720-730 (DSSSDSSSSSE). Residues 689–897 (LDQLKAESSS…VESDDRRRRR (209 aa)) are disordered. Over residues 743–897 (NSEESSKKKE…VESDDRRRRR (155 aa)) the composition is skewed to basic and acidic residues.

Belongs to the CWC22 family. In terms of tissue distribution, expressed in germ cells, oocytes, and sperm cells.

It localises to the nucleus. Its subcellular location is the nucleus speckle. In terms of biological role, required for pre-mRNA splicing and for exon-junction complex (EJC) assembly. Hinders EIF4A3 from non-specifically binding RNA and escorts it to the splicing machinery to promote EJC assembly on mature mRNAs. Through its role in EJC assembly, required for nonsense-mediated mRNA decay. Plays a role in the nuclear retention of unspliced mRNAs. Plays a role in sex determination. Required for early embryogenesis and tissue differentiation. This is Pre-mRNA-splicing factor CWC22 homolog from Caenorhabditis elegans.